Reading from the N-terminus, the 386-residue chain is Patatin group M-3 (386 aa).

The first 23 residues, 1-23 (MATTKSFLILFFMILATTSSTCA), serve as a signal peptide directing secretion. Residues 32–229 (LSIDGGGIKG…TVGDPALLSL (198 aa)) enclose the PNPLA domain. Positions 36–41 (GGGIKG) match the GXGXXG motif. Residues 75 to 79 (GTSTG) carry the GXSXG motif. The active-site Nucleophile is Ser77. N-linked (GlcNAc...) asparagine glycosylation is present at Asn115. The active-site Proton acceptor is the Asp215. Residues 215–217 (DGG) carry the DGA/G motif. Residues 321–384 (ENALTGTTTE…DRKKLRANKA (64 aa)) adopt a coiled-coil conformation.

This sequence belongs to the patatin family. In terms of tissue distribution, tuber.

It is found in the vacuole. Probable lipolytic acyl hydrolase (LAH), an activity which is thought to be involved in the response of tubers to pathogens. This Solanum tuberosum (Potato) protein is Patatin group M-3.